Consider the following 612-residue polypeptide: Sulfite reductase [NADPH] flavoprotein alpha-component (612 aa).

The region spanning 64–202 (VTLISASQTG…QAQQWRQQVV (139 aa)) is the Flavodoxin-like domain. Residues 70 to 75 (SQTGNA), 117 to 120 (STQG), and 153 to 162 (LGDTSYEHFC) contribute to the FMN site. One can recognise an FAD-binding FR-type domain in the interval 247 to 461 (TAPLTAQLSV…IEHNDNFRLP (215 aa)). Residues threonine 335, lysine 369, 399 to 402 (RLYS), 417 to 419 (TVG), tyrosine 423, and 432 to 435 (GGAS) contribute to the FAD site. NADP(+) is bound by residues 532–533 (SR), 538–542 (KIYVQ), and aspartate 574. Residue tyrosine 612 participates in FAD binding.

This sequence belongs to the NADPH-dependent sulphite reductase flavoprotein subunit CysJ family. It in the N-terminal section; belongs to the flavodoxin family. The protein in the C-terminal section; belongs to the flavoprotein pyridine nucleotide cytochrome reductase family. Alpha(8)-beta(8). The alpha component is a flavoprotein, the beta component is a hemoprotein. It depends on FAD as a cofactor. The cofactor is FMN.

It carries out the reaction hydrogen sulfide + 3 NADP(+) + 3 H2O = sulfite + 3 NADPH + 4 H(+). The protein operates within sulfur metabolism; hydrogen sulfide biosynthesis; hydrogen sulfide from sulfite (NADPH route): step 1/1. Component of the sulfite reductase complex that catalyzes the 6-electron reduction of sulfite to sulfide. This is one of several activities required for the biosynthesis of L-cysteine from sulfate. The flavoprotein component catalyzes the electron flow from NADPH -&gt; FAD -&gt; FMN to the hemoprotein component. In Yersinia pestis bv. Antiqua (strain Nepal516), this protein is Sulfite reductase [NADPH] flavoprotein alpha-component.